A 195-amino-acid chain; its full sequence is Matrix protein (195 aa).

This sequence belongs to the novirhabdovirus matrix protein family. Homomultimer.

Its subcellular location is the virion. The protein resides in the host cytoplasm. Its function is as follows. The M protein has a crucial role in virus assembly and interacts with the RNP complex as well as with the viral membrane. The chain is Matrix protein (M) from Salmo (IHNV).